The chain runs to 122 residues: Large ribosomal subunit protein uL14 (122 aa).

It belongs to the universal ribosomal protein uL14 family. As to quaternary structure, part of the 50S ribosomal subunit. Forms a cluster with proteins L3 and L19. In the 70S ribosome, L14 and L19 interact and together make contacts with the 16S rRNA in bridges B5 and B8.

Binds to 23S rRNA. Forms part of two intersubunit bridges in the 70S ribosome. The sequence is that of Large ribosomal subunit protein uL14 from Roseiflexus castenholzii (strain DSM 13941 / HLO8).